The chain runs to 95 residues: MLLIKKINLQFFASKKGVGSTKNGRDSNPKYLGAKKSDGEFAKSGQIIYRQRGTKIYPGKNVGLGRDHTLFAKIDGIVKFTKFGDNKTKVSVIAK.

Residues 1–12 constitute a propeptide that is removed on maturation; that stretch reads MLLIKKINLQFF. The tract at residues 17 to 37 is disordered; the sequence is GVGSTKNGRDSNPKYLGAKKS.

It belongs to the bacterial ribosomal protein bL27 family. In terms of processing, the N-terminus is cleaved by ribosomal processing cysteine protease Prp.

The protein is Large ribosomal subunit protein bL27 of Malacoplasma penetrans (strain HF-2) (Mycoplasma penetrans).